A 362-amino-acid polypeptide reads, in one-letter code: Methylthioribose-1-phosphate isomerase (362 aa).

Substrate-binding positions include 53 to 55 (RGA), Arg-90, and Gln-201. Catalysis depends on Asp-242, which acts as the Proton donor. Position 252–253 (252–253 (NK)) interacts with substrate.

Belongs to the eIF-2B alpha/beta/delta subunits family. MtnA subfamily.

The catalysed reaction is 5-(methylsulfanyl)-alpha-D-ribose 1-phosphate = 5-(methylsulfanyl)-D-ribulose 1-phosphate. It functions in the pathway amino-acid biosynthesis; L-methionine biosynthesis via salvage pathway; L-methionine from S-methyl-5-thio-alpha-D-ribose 1-phosphate: step 1/6. Its function is as follows. Catalyzes the interconversion of methylthioribose-1-phosphate (MTR-1-P) into methylthioribulose-1-phosphate (MTRu-1-P). This is Methylthioribose-1-phosphate isomerase from Paramagnetospirillum magneticum (strain ATCC 700264 / AMB-1) (Magnetospirillum magneticum).